The following is an 80-amino-acid chain: Large ribosomal subunit protein bL31B (80 aa).

The protein belongs to the bacterial ribosomal protein bL31 family. Type B subfamily. As to quaternary structure, part of the 50S ribosomal subunit.

This chain is Large ribosomal subunit protein bL31B, found in Streptococcus sanguinis (strain SK36).